Consider the following 391-residue polypeptide: Adhesion defective protein 1 (391 aa).

A compositionally biased stretch (polar residues) spans 180–190; it reads SQSRPPQNQIQ. 2 disordered regions span residues 180 to 217 and 366 to 391; these read SQSR…PDSP and VEGE…RTKV. The segment covering 201 to 211 has biased composition (low complexity); that stretch reads SESVNINSSSS. Residues 370–383 are compositionally biased toward polar residues; sequence NPNNNPNFYSSDML.

The protein belongs to the adn1/SEU family.

It is found in the nucleus. Its function is as follows. Probable transcriptional regulator involved in cell adhesion. In Schizosaccharomyces pombe (strain 972 / ATCC 24843) (Fission yeast), this protein is Adhesion defective protein 1 (adn1).